A 69-amino-acid chain; its full sequence is FXYD domain-containing ion transport regulator 11 (69 aa).

The N-terminal stretch at 1-22 (MSQLTELVLLTVFLALFSRAEA) is a signal peptide. The Extracellular segment spans residues 23–33 (NPFVYNYEALR). The chain crosses the membrane as a helical span at residues 34 to 54 (IGGLVFTCVLVAGAVTALCWG). Over 55-69 (QCKPKRKHDDDASKI) the chain is Cytoplasmic.

Belongs to the FXYD family. Detected in adult gill and in larval skin at 2 days post-fertilization (at protein level). In adult gill, strong expression is found in the basal regions of the secondary lamellae.

It is found in the cell membrane. Its function is as follows. May modulate the activity of a sodium/potassium-transporting ATPase. In Danio rerio (Zebrafish), this protein is FXYD domain-containing ion transport regulator 11.